The following is a 196-amino-acid chain: GTP cyclohydrolase 1 (196 aa).

Zn(2+) contacts are provided by C86, H89, and C158.

This sequence belongs to the GTP cyclohydrolase I family. As to quaternary structure, homomer.

It catalyses the reaction GTP + H2O = 7,8-dihydroneopterin 3'-triphosphate + formate + H(+). It functions in the pathway cofactor biosynthesis; 7,8-dihydroneopterin triphosphate biosynthesis; 7,8-dihydroneopterin triphosphate from GTP: step 1/1. The polypeptide is GTP cyclohydrolase 1 (Clostridium botulinum (strain Loch Maree / Type A3)).